The primary structure comprises 400 residues: ELAV-like protein 4 (400 aa).

The disordered stretch occupies residues 12 to 48 (TMEPQVSNGPTSNTSNGPSSNSRNCPSPMQTGAATDD). Residues 18 to 33 (SNGPTSNTSNGPSSNS) are compositionally biased toward low complexity. Residues 34–44 (RNCPSPMQTGA) are compositionally biased toward polar residues. 3 RRM domains span residues 51 to 158 (TNLI…YARP), 166 to 246 (ANLY…FANN), and 317 to 395 (WCIF…FKTN).

This sequence belongs to the RRM elav family.

The protein localises to the cytoplasm. The protein resides in the perikaryon. It localises to the cell projection. It is found in the axon. Its subcellular location is the dendrite. The protein localises to the growth cone. RNA-binding protein that is involved in the post-transcriptional regulation of mRNAs. Plays a role in the regulation of mRNA stability, alternative splicing and translation. Binds to AU-rich element (ARE) sequences in the 3' untranslated region (3'UTR) of target mRNAs. Mainly plays a role in neuron-specific RNA processing. The polypeptide is ELAV-like protein 4 (elavl4) (Xenopus tropicalis (Western clawed frog)).